A 44-amino-acid polypeptide reads, in one-letter code: Antibacterial protein 3 homolog (44 aa).

The protein belongs to the staphylococcal hemolytic protein family.

It localises to the secreted. Has hemolytic activity and also inhibits the growth of gonococci. This chain is Antibacterial protein 3 homolog, found in Staphylococcus haemolyticus (strain JCSC1435).